Consider the following 357-residue polypeptide: uncharacterized protein (357 aa).

This is an uncharacterized protein from Mycobacterium bovis (strain ATCC BAA-935 / AF2122/97).